The following is a 725-amino-acid chain: Consortin (725 aa).

5 disordered regions span residues 1 to 72 (MDDS…LNNN), 103 to 124 (GKDK…AKKI), 296 to 353 (LLVS…SLSV), 375 to 397 (TQSS…CEDD), and 485 to 510 (QQPD…ENVL). The Cytoplasmic segment spans residues 1-664 (MDDSDTPTYY…LDQDEVGGGS (664 aa)). Polar residues predominate over residues 63–72 (VSEQDSLNNN). A compositionally biased stretch (basic residues) spans 109 to 121 (PGKRSPRSKKGTA). Over residues 300–314 (EDPKEGGATTKESES) the composition is skewed to basic and acidic residues. Composition is skewed to polar residues over residues 343–353 (DVQTDSPSLSV) and 375–388 (TQSS…SGPD). Residues 665–685 (CILLVLLCIATVFLSVGGTAL) traverse the membrane as a helical segment. Residues 686–725 (YCTFGDMESPVCTDFADNMDFYYTKLLQGVAELKHWIYLS) are Extracellular-facing.

The protein belongs to the CNST family. In terms of assembly, interacts with connexins GJA1/CX43, GJB1/CX32, GJB2/CX26, GJB3/CX31, GJB6/CX30 and GJC1/CX45. Also interacts with GGA1 and GGA2. Does not interact with PANX1.

The protein localises to the cell membrane. Its subcellular location is the golgi apparatus. It localises to the trans-Golgi network membrane. It is found in the cytoplasmic vesicle. The protein resides in the secretory vesicle. Required for targeting of connexins to the plasma membrane. This chain is Consortin (CNST), found in Homo sapiens (Human).